The sequence spans 297 residues: uncharacterized protein (297 aa).

2 helical membrane-spanning segments follow: residues 17–37 (LALS…KEIF) and 48–68 (TISG…GYSI). In terms of domain architecture, PNPLA spans 17–196 (LALSGGGFYG…TLNYPITLFD (180 aa)). Residues 21-26 (GGGFYG) carry the GXGXXG motif. Residues 51–55 (GVSVG) carry the GXSXG motif. Ser53 acts as the Nucleophile in catalysis. A glycan (N-linked (GlcNAc...) asparagine; by host) is linked at Asn122. The active-site Proton acceptor is Asp183. The DGA/G signature appears at 183 to 185 (DGG). A glycan (N-linked (GlcNAc...) asparagine; by host) is linked at Asn239.

The protein localises to the membrane. In terms of biological role, probable lipid hydrolase. This is an uncharacterized protein from Acanthamoeba polyphaga mimivirus (APMV).